A 454-amino-acid chain; its full sequence is Rhizobactin siderophore biosynthesis protein RhbE (454 aa).

Position 7 to 13 (7 to 13) interacts with FAD; that stretch reads AGIGIGP.

Belongs to the lysine N(6)-hydroxylase/L-ornithine N(5)-oxygenase family. Requires FAD as cofactor.

Its pathway is siderophore biosynthesis; rhizobactin biosynthesis. The polypeptide is Rhizobactin siderophore biosynthesis protein RhbE (rhbE) (Rhizobium meliloti (strain 1021) (Ensifer meliloti)).